The primary structure comprises 85 residues: Beta-insect depressant toxin BmKITa (85 aa).

A signal peptide spans 1–21 (MKLFLLLLISASMLIDGLVNA). The region spanning 22–82 (DGYIRGSNGC…TWKSESNTCG (61 aa)) is the LCN-type CS-alpha/beta domain. 4 disulfide bridges follow: C31–C81, C35–C56, C42–C63, and C46–C65. Residue G82 is modified to Glycine amide.

Expressed by the venom gland.

It localises to the secreted. Depressant insect beta-toxins cause a transient contraction paralysis followed by a slow flaccid paralysis. They bind voltage-independently at site-4 of sodium channels (Nav) and shift the voltage of activation toward more negative potentials thereby affecting sodium channel activation and promoting spontaneous and repetitive firing. This toxin also displays an evident analgesic effect but is devoid of any toxicity on mice. This Olivierus martensii (Manchurian scorpion) protein is Beta-insect depressant toxin BmKITa.